An 89-amino-acid polypeptide reads, in one-letter code: Small ribosomal subunit protein uS14A (89 aa).

It belongs to the universal ribosomal protein uS14 family. As to quaternary structure, part of the 30S ribosomal subunit. Contacts proteins S3 and S10.

Functionally, binds 16S rRNA, required for the assembly of 30S particles and may also be responsible for determining the conformation of the 16S rRNA at the A site. This is Small ribosomal subunit protein uS14A from Ligilactobacillus salivarius (strain UCC118) (Lactobacillus salivarius).